A 316-amino-acid chain; its full sequence is CD-NTase-associated protein 12 (316 aa).

The region spanning 4 to 121 is the TIR domain; sequence RIFIGSSSEG…MLGITQTRYE (118 aa). The interval 161 to 316 is STING domain; it reads STVIAISYFE…ECVEIIEPQP (156 aa). Positions 172, 237, and 253 each coordinate 3',3'-c-di-GMP.

In the C-terminal section; belongs to the bacterial STING family. As to quaternary structure, forms homodimers; in the presence of c-di-GMP forms filaments with an ordered array of parallel-stacked subunits.

It carries out the reaction NAD(+) + H2O = ADP-D-ribose + nicotinamide + H(+). Its activity is regulated as follows. NAD(+) hydrolase activity is strongly stimulated by c-di-GMP, weakly by 3'3'-cGAMP, very weakly by c-di-AMP but not at all by 2'3'-cGAMP. Self-association of TIR domains is required for NADase activity. Functionally, effector protein of a CBASS antiviral system with NAD(+) hydrolase activity. CBASS (cyclic oligonucleotide-based antiphage signaling system) provides immunity against bacteriophage. The CD-NTase protein synthesizes cyclic nucleotides in response to infection; these serve as specific second messenger signals. The signals activate a diverse range of effectors, leading to bacterial cell death and thus abortive phage infection. A type I-D(GG) CBASS system. Its function is as follows. Binds c-di-GMP (synthesized by the cognate CdnE encoded upstream in the same operon) but not c-di-AMP, 2'-3'-cGAMP, 3'-3'-cGAMP or cUMP-AMP (tested without the N-terminal TIR domain). Upon activation by c-di-GMP forms filaments which hydrolyze NAD(+); filament formation is required for enzyme activation. The protein is CD-NTase-associated protein 12 of Lachnospiraceae bacterium (strain RUG226).